The chain runs to 176 residues: MKILFCDLLLLSLFSSVSSSCQKDCLVCREKLRPTLDSFSLEMCILECEEKAFTSPLWTPCTKVMARGSWQLSPADPDHVAAALDQPRASEMQHLKRMPRVRSLFQRQKRTEPGLEEVGEIEQKQLQKRFGGFTGARKSARKLANQKRFSEFMRQYLVLSMQSSQRRRTLHQNGNA.

A signal peptide spans 1-19 (MKILFCDLLLLSLFSSVSS). Propeptides lie at residues 20 to 95 (SCQK…MQHL) and 169 to 176 (TLHQNGNA).

This sequence belongs to the opioid neuropeptide precursor family. In terms of processing, specific enzymatic cleavages at paired basic residues probably yield other active peptides besides nociceptin. The N-terminal domain contains 6 conserved cysteines thought to be involved in disulfide bonding and/or processing.

The protein resides in the secreted. In terms of biological role, ligand of the opioid receptor-like receptor OPRL1. It may act as a transmitter in the brain by modulating nociceptive and locomotor behavior. May be involved in neuronal differentiation and development. Blocks nociceptin action in pain transmission by inhibiting nociceptin-induced hyperalgesia and allodynia. Functionally, has potent analgesic activity. This is Prepronociceptin (PNOC) from Bos taurus (Bovine).